Here is a 429-residue protein sequence, read N- to C-terminus: Ribosomal RNA small subunit methyltransferase B (429 aa).

S-adenosyl-L-methionine is bound by residues Cys-254–Lys-260, Asp-277, Asp-303, and Asp-322. The Nucleophile role is filled by Cys-375.

Belongs to the class I-like SAM-binding methyltransferase superfamily. RsmB/NOP family.

Its subcellular location is the cytoplasm. It carries out the reaction cytidine(967) in 16S rRNA + S-adenosyl-L-methionine = 5-methylcytidine(967) in 16S rRNA + S-adenosyl-L-homocysteine + H(+). Its function is as follows. Specifically methylates the cytosine at position 967 (m5C967) of 16S rRNA. The chain is Ribosomal RNA small subunit methyltransferase B from Escherichia coli (strain SMS-3-5 / SECEC).